A 159-amino-acid chain; its full sequence is Transcription elongation factor GreA (159 aa).

It belongs to the GreA/GreB family.

In terms of biological role, necessary for efficient RNA polymerase transcription elongation past template-encoded arresting sites. The arresting sites in DNA have the property of trapping a certain fraction of elongating RNA polymerases that pass through, resulting in locked ternary complexes. Cleavage of the nascent transcript by cleavage factors such as GreA or GreB allows the resumption of elongation from the new 3'terminus. GreA releases sequences of 2 to 3 nucleotides. The polypeptide is Transcription elongation factor GreA (Orientia tsutsugamushi (strain Boryong) (Rickettsia tsutsugamushi)).